Consider the following 424-residue polypeptide: MFDRVEINIKAGDGGSGKVSFRREKFVPYGGPDGGDGGDGGNVYLEADSGLYSLLNFKHKRVHKASNGEGGMGSRCTGHNGADLVIKVPVGTVATILEENGQKRVLADLAADGDRTLVAHGGQGGLGNTHFVSSTNQAPMLAQKGQPGGEYDLILELKLIADVAIIGYPNVGKSSLLSLLTAAKPKVANYPFTTLSPVMGVIERPEGVFVMAEVPGLIENAHLGKGLGHDFLRHISRTRMVIHLLDGTSENPIDDMIKVNSELYLYDASLSERPQVVAINKIDDELVQLRREELKETFKEAGLEVFFISALTGEGVDVLLAKVAEKLDILKAADISETAPDHEVKIFRPAPKGKMGFRITRLEDGWQVEAPEIERIIEHSDIEDPEVRRQVMVLLKHRSVQQSLIKSGAVIGQKIITGRMEWYL.

The region spanning 1–160 is the Obg domain; that stretch reads MFDRVEINIK…YDLILELKLI (160 aa). The region spanning 161 to 328 is the OBG-type G domain; the sequence is ADVAIIGYPN…LLAKVAEKLD (168 aa). GTP-binding positions include 167–174, 192–196, 213–216, 280–283, and 309–311; these read GYPNVGKS, FTTLS, EVPG, NKID, and SAL. The Mg(2+) site is built by serine 174 and threonine 194. Residues 349-424 enclose the OCT domain; it reads PAPKGKMGFR…IITGRMEWYL (76 aa).

The protein belongs to the TRAFAC class OBG-HflX-like GTPase superfamily. OBG GTPase family. In terms of assembly, monomer. Requires Mg(2+) as cofactor.

Its subcellular location is the cytoplasm. In terms of biological role, an essential GTPase which binds GTP, GDP and possibly (p)ppGpp with moderate affinity, with high nucleotide exchange rates and a fairly low GTP hydrolysis rate. Plays a role in control of the cell cycle, stress response, ribosome biogenesis and in those bacteria that undergo differentiation, in morphogenesis control. This chain is GTPase Obg, found in Dehalococcoides mccartyi (strain ATCC BAA-2100 / JCM 16839 / KCTC 5957 / BAV1).